A 494-amino-acid chain; its full sequence is Glycerol kinase (494 aa).

Residue threonine 13 coordinates ADP. Residues threonine 13, threonine 14, and serine 15 each contribute to the ATP site. Threonine 13 is a binding site for sn-glycerol 3-phosphate. Arginine 17 serves as a coordination point for ADP. Positions 83, 84, 135, and 244 each coordinate sn-glycerol 3-phosphate. Arginine 83, glutamate 84, tyrosine 135, aspartate 244, and glutamine 245 together coordinate glycerol. 2 residues coordinate ADP: threonine 266 and glycine 309. Residues threonine 266, glycine 309, glutamine 313, and glycine 410 each contribute to the ATP site. Residues glycine 410 and asparagine 414 each contribute to the ADP site.

The protein belongs to the FGGY kinase family.

The catalysed reaction is glycerol + ATP = sn-glycerol 3-phosphate + ADP + H(+). The protein operates within polyol metabolism; glycerol degradation via glycerol kinase pathway; sn-glycerol 3-phosphate from glycerol: step 1/1. Its activity is regulated as follows. Inhibited by fructose 1,6-bisphosphate (FBP). Functionally, key enzyme in the regulation of glycerol uptake and metabolism. Catalyzes the phosphorylation of glycerol to yield sn-glycerol 3-phosphate. The polypeptide is Glycerol kinase (Shewanella sp. (strain MR-4)).